The following is a 180-amino-acid chain: MPKPTKGPRLGGSSSHQKAILANLATSLFEHGRITTTEPKARALRPYAEKLITHAKKGALHNRREVLKKLRDKDVVHTLFAEIGPFFADRDGGYTRIIKIEARKGDNAPMAVIELVREKTVTSEANRARRVAAAQAKAKKAAAMPTEESEAKPAEEGDVVGASEPDAKAPEEPPTEAPEN.

A disordered region spans residues 134–180 (AQAKAKKAAAMPTEESEAKPAEEGDVVGASEPDAKAPEEPPTEAPEN).

Belongs to the bacterial ribosomal protein bL17 family. Part of the 50S ribosomal subunit. Contacts protein L32.

The sequence is that of Large ribosomal subunit protein bL17 from Mycobacterium tuberculosis (strain CDC 1551 / Oshkosh).